The chain runs to 447 residues: UDP-N-acetylmuramoylalanine--D-glutamate ligase (447 aa).

130–136 (GTSGKTT) is an ATP binding site.

It belongs to the MurCDEF family.

The protein localises to the cytoplasm. It carries out the reaction UDP-N-acetyl-alpha-D-muramoyl-L-alanine + D-glutamate + ATP = UDP-N-acetyl-alpha-D-muramoyl-L-alanyl-D-glutamate + ADP + phosphate + H(+). The protein operates within cell wall biogenesis; peptidoglycan biosynthesis. In terms of biological role, cell wall formation. Catalyzes the addition of glutamate to the nucleotide precursor UDP-N-acetylmuramoyl-L-alanine (UMA). The chain is UDP-N-acetylmuramoylalanine--D-glutamate ligase from Oleidesulfovibrio alaskensis (strain ATCC BAA-1058 / DSM 17464 / G20) (Desulfovibrio alaskensis).